We begin with the raw amino-acid sequence, 349 residues long: tRNA pseudouridine synthase D (349 aa).

Substrate is bound at residue Phe26. Asp79 serves as the catalytic Nucleophile. Asn128 provides a ligand contact to substrate. A TRUD domain is found at 154–302 (GVPNYFGEQR…VEGCRRAILV (149 aa)). Substrate is bound at residue Phe328.

The protein belongs to the pseudouridine synthase TruD family.

The enzyme catalyses uridine(13) in tRNA = pseudouridine(13) in tRNA. In terms of biological role, responsible for synthesis of pseudouridine from uracil-13 in transfer RNAs. The sequence is that of tRNA pseudouridine synthase D from Photorhabdus laumondii subsp. laumondii (strain DSM 15139 / CIP 105565 / TT01) (Photorhabdus luminescens subsp. laumondii).